Consider the following 103-residue polypeptide: Co-chaperonin GroES (103 aa).

It belongs to the GroES chaperonin family. In terms of assembly, heptamer of 7 subunits arranged in a ring. Interacts with the chaperonin GroEL.

It is found in the cytoplasm. Its function is as follows. Together with the chaperonin GroEL, plays an essential role in assisting protein folding. The GroEL-GroES system forms a nano-cage that allows encapsulation of the non-native substrate proteins and provides a physical environment optimized to promote and accelerate protein folding. GroES binds to the apical surface of the GroEL ring, thereby capping the opening of the GroEL channel. This chain is Co-chaperonin GroES, found in Prochlorococcus marinus (strain MIT 9312).